The chain runs to 263 residues: Complement C1q tumor necrosis factor-related protein 6 (263 aa).

Positions Met-1–Gly-24 are cleaved as a signal peptide. Residue Asn-76 is glycosylated (N-linked (GlcNAc...) asparagine). Residues Leu-80–Ser-123 are disordered. The region spanning Gly-82 to Ser-123 is the Collagen-like domain. The 140-residue stretch at Cys-124–Asn-263 folds into the C1q domain.

The protein localises to the secreted. This Rattus norvegicus (Rat) protein is Complement C1q tumor necrosis factor-related protein 6 (C1qtnf6).